A 364-amino-acid chain; its full sequence is UDP-3-O-acylglucosamine N-acyltransferase (364 aa).

The Proton acceptor role is filled by H267.

This sequence belongs to the transferase hexapeptide repeat family. LpxD subfamily. Homotrimer.

It catalyses the reaction a UDP-3-O-[(3R)-3-hydroxyacyl]-alpha-D-glucosamine + a (3R)-hydroxyacyl-[ACP] = a UDP-2-N,3-O-bis[(3R)-3-hydroxyacyl]-alpha-D-glucosamine + holo-[ACP] + H(+). It functions in the pathway bacterial outer membrane biogenesis; LPS lipid A biosynthesis. In terms of biological role, catalyzes the N-acylation of UDP-3-O-acylglucosamine using 3-hydroxyacyl-ACP as the acyl donor. Is involved in the biosynthesis of lipid A, a phosphorylated glycolipid that anchors the lipopolysaccharide to the outer membrane of the cell. In Bordetella petrii (strain ATCC BAA-461 / DSM 12804 / CCUG 43448), this protein is UDP-3-O-acylglucosamine N-acyltransferase.